Consider the following 344-residue polypeptide: Arginine N-succinyltransferase (344 aa).

L125 contacts succinyl-CoA. H229 functions as the Proton donor in the catalytic mechanism.

This sequence belongs to the arginine N-succinyltransferase family.

It carries out the reaction succinyl-CoA + L-arginine = N(2)-succinyl-L-arginine + CoA + H(+). Its pathway is amino-acid degradation; L-arginine degradation via AST pathway; L-glutamate and succinate from L-arginine: step 1/5. Catalyzes the transfer of succinyl-CoA to arginine to produce N(2)-succinylarginine. This Escherichia fergusonii (strain ATCC 35469 / DSM 13698 / CCUG 18766 / IAM 14443 / JCM 21226 / LMG 7866 / NBRC 102419 / NCTC 12128 / CDC 0568-73) protein is Arginine N-succinyltransferase.